The chain runs to 172 residues: NADH-quinone oxidoreductase subunit B (172 aa).

The [4Fe-4S] cluster site is built by Cys-52, Cys-53, Cys-117, and Cys-147.

Belongs to the complex I 20 kDa subunit family. As to quaternary structure, NDH-1 is composed of 14 different subunits. Subunits NuoB, C, D, E, F, and G constitute the peripheral sector of the complex. Requires [4Fe-4S] cluster as cofactor.

The protein resides in the cell inner membrane. It carries out the reaction a quinone + NADH + 5 H(+)(in) = a quinol + NAD(+) + 4 H(+)(out). Its function is as follows. NDH-1 shuttles electrons from NADH, via FMN and iron-sulfur (Fe-S) centers, to quinones in the respiratory chain. Couples the redox reaction to proton translocation (for every two electrons transferred, four hydrogen ions are translocated across the cytoplasmic membrane), and thus conserves the redox energy in a proton gradient. The protein is NADH-quinone oxidoreductase subunit B of Ehrlichia ruminantium (strain Gardel).